A 285-amino-acid polypeptide reads, in one-letter code: Urease accessory protein UreD 1 (285 aa).

Belongs to the UreD family. In terms of assembly, ureD, UreF and UreG form a complex that acts as a GTP-hydrolysis-dependent molecular chaperone, activating the urease apoprotein by helping to assemble the nickel containing metallocenter of UreC. The UreE protein probably delivers the nickel.

It is found in the cytoplasm. Required for maturation of urease via the functional incorporation of the urease nickel metallocenter. This is Urease accessory protein UreD 1 from Pseudomonas syringae pv. tomato (strain ATCC BAA-871 / DC3000).